The sequence spans 409 residues: Argininosuccinate synthase (409 aa).

ATP is bound by residues 10–18 (AYSGGLDTS) and A37. L-citrulline-binding residues include Y90 and S95. Residue G120 coordinates ATP. T122, N126, and D127 together coordinate L-aspartate. N126 serves as a coordination point for L-citrulline. Residues R130, S182, S191, E267, and Y279 each coordinate L-citrulline.

This sequence belongs to the argininosuccinate synthase family. Type 1 subfamily. In terms of assembly, homotetramer.

It is found in the cytoplasm. The catalysed reaction is L-citrulline + L-aspartate + ATP = 2-(N(omega)-L-arginino)succinate + AMP + diphosphate + H(+). The protein operates within amino-acid biosynthesis; L-arginine biosynthesis; L-arginine from L-ornithine and carbamoyl phosphate: step 2/3. This chain is Argininosuccinate synthase, found in Aromatoleum aromaticum (strain DSM 19018 / LMG 30748 / EbN1) (Azoarcus sp. (strain EbN1)).